The sequence spans 610 residues: UvrABC system protein C (610 aa).

The 79-residue stretch at 16-94 folds into the GIY-YIG domain; it reads NQPGVYRMYN…IKQYLPKYNV (79 aa). One can recognise a UVR domain in the interval 204–239; sequence NQVLSILVEKMEQASRELRFEDAAKARDQIQAIRRV.

It belongs to the UvrC family. As to quaternary structure, interacts with UvrB in an incision complex.

It is found in the cytoplasm. In terms of biological role, the UvrABC repair system catalyzes the recognition and processing of DNA lesions. UvrC both incises the 5' and 3' sides of the lesion. The N-terminal half is responsible for the 3' incision and the C-terminal half is responsible for the 5' incision. This is UvrABC system protein C from Vibrio cholerae serotype O1 (strain ATCC 39315 / El Tor Inaba N16961).